The primary structure comprises 98 residues: NADH-ubiquinone oxidoreductase chain 4L (98 aa).

The next 3 helical transmembrane spans lie at 2–22, 29–49, and 61–81; these read PSIS…MLMF, SLLC…LIIL, and ILLL…LVTV.

This sequence belongs to the complex I subunit 4L family. In terms of assembly, core subunit of respiratory chain NADH dehydrogenase (Complex I) which is composed of 45 different subunits.

It localises to the mitochondrion inner membrane. The enzyme catalyses a ubiquinone + NADH + 5 H(+)(in) = a ubiquinol + NAD(+) + 4 H(+)(out). Functionally, core subunit of the mitochondrial membrane respiratory chain NADH dehydrogenase (Complex I) which catalyzes electron transfer from NADH through the respiratory chain, using ubiquinone as an electron acceptor. Part of the enzyme membrane arm which is embedded in the lipid bilayer and involved in proton translocation. This is NADH-ubiquinone oxidoreductase chain 4L (MT-ND4L) from Microcebus mamiratra (Claire's mouse lemur).